The chain runs to 692 residues: Elongation factor G (692 aa).

Positions 8–282 (AKTRNIGIMA…AVIAYLPSPL (275 aa)) constitute a tr-type G domain. GTP contacts are provided by residues 17–24 (AHVDAGKT), 81–85 (DTPGH), and 135–138 (NKMD).

It belongs to the TRAFAC class translation factor GTPase superfamily. Classic translation factor GTPase family. EF-G/EF-2 subfamily.

It localises to the cytoplasm. Catalyzes the GTP-dependent ribosomal translocation step during translation elongation. During this step, the ribosome changes from the pre-translocational (PRE) to the post-translocational (POST) state as the newly formed A-site-bound peptidyl-tRNA and P-site-bound deacylated tRNA move to the P and E sites, respectively. Catalyzes the coordinated movement of the two tRNA molecules, the mRNA and conformational changes in the ribosome. This is Elongation factor G (fus) from Streptococcus pyogenes serotype M1.